The following is a 313-amino-acid chain: MLKMESTQQMASSIINSSFEAAVVAATSTLELMGIQYDYNEVYTRVKSKFDFVMDDSGVKNNLMGKAATIDQALNGKFSSSIRNRNWMTDSKTVARLDEDVNKLRLLLSSKGIDQKMRVLNACFNVKRVPGKSSSVIKCTRLMKDKIERGEVEVDDTFVEERMEIDTIDWKSRYDQLERRFESLKQRVNEKYNNWVIKARKVNENMNSLQNVISQQQAHINELQIYNNKLERDLQSKIGSVISSIEWYLRSMELSDDIKSDIEQQLNSIDHINPVNAFDDFESILRNLISDYDRIFIMFKGLLQQSNYTYTYE.

The RNA-binding stretch occupies residues 1–149 (MLKMESTQQM…TRLMKDKIER (149 aa)). Residues 150–206 (GEVEVDDTFVEERMEIDTIDWKSRYDQLERRFESLKQRVNEKYNNWVIKARKVNENM) are dimerization. A coiled-coil region spans residues 166–237 (DTIDWKSRYD…NKLERDLQSK (72 aa)). Residues 170 to 234 (WKSRYDQLER…IYNNKLERDL (65 aa)) form an interaction with host ZC3H7B region. The interaction with host EIF4G1 stretch occupies residues 208–313 (SLQNVISQQQ…QQSNYTYTYE (106 aa)).

The protein belongs to the rotavirus NSP3 family. In terms of assembly, homodimer. Interacts (via the coiled-coil region) with host ZC3H7B (via LD motif). Interacts with host EIF4G1.

It localises to the host cytoplasm. Functionally, plays an important role in stimulating the translation of viral mRNAs. These mRNAs are capped but not polyadenylated, instead terminating in a conserved sequence 'GACC' at the 3' that is recognized by NSP3, which competes with host PABPC1 for EIF4G1 binding. The interaction between NSP3 and host EIF4G1 stabilizes the EIF4E-EIF4G1 interaction, thereby facilitating the initiation of capped mRNA translation. The chain is Non-structural protein 3 from Homo sapiens (Human).